The chain runs to 339 residues: NADH-quinone oxidoreductase subunit H (339 aa).

9 consecutive transmembrane segments (helical) span residues I9 to C29, P50 to F70, I82 to I102, V115 to G135, M161 to I181, M187 to L207, M235 to T255, I275 to I295, and G311 to V331.

The protein belongs to the complex I subunit 1 family. As to quaternary structure, NDH-1 is composed of 14 different subunits. Subunits NuoA, H, J, K, L, M, N constitute the membrane sector of the complex.

It is found in the cell inner membrane. The enzyme catalyses a quinone + NADH + 5 H(+)(in) = a quinol + NAD(+) + 4 H(+)(out). Its function is as follows. NDH-1 shuttles electrons from NADH, via FMN and iron-sulfur (Fe-S) centers, to quinones in the respiratory chain. The immediate electron acceptor for the enzyme in this species is believed to be ubiquinone. Couples the redox reaction to proton translocation (for every two electrons transferred, four hydrogen ions are translocated across the cytoplasmic membrane), and thus conserves the redox energy in a proton gradient. This subunit may bind ubiquinone. The polypeptide is NADH-quinone oxidoreductase subunit H (Rickettsia peacockii (strain Rustic)).